A 455-amino-acid polypeptide reads, in one-letter code: Beta-1,3-galactosyl-O-glycosyl-glycoprotein beta-1,6-N-acetylglucosaminyltransferase 4 (455 aa).

Residues 1–13 (MKIFRCCFKYTLQ) lie on the Cytoplasmic side of the membrane. A helical; Signal-anchor for type II membrane protein membrane pass occupies residues 14-34 (QKLFILLLTLWLFSLLKLLNV). The Lumenal segment spans residues 35–455 (GRLLFPQRDI…TEGTRQSHTL (421 aa)). The N-linked (GlcNAc...) asparagine glycan is linked to Asn73. 4 disulfides stabilise this stretch: Cys74-Cys228, Cys162-Cys383, Cys183-Cys210, and Cys392-Cys424. N-linked (GlcNAc...) asparagine glycosylation is found at Asn287 and Asn382.

This sequence belongs to the glycosyltransferase 14 family.

The protein resides in the golgi apparatus membrane. It carries out the reaction a 3-O-[beta-D-galactosyl-(1-&gt;3)-N-acetyl-alpha-D-galactosaminyl]-L-seryl-[protein] + UDP-N-acetyl-alpha-D-glucosamine = 3-O-{beta-D-galactosyl-(1-&gt;3)-[N-acetyl-beta-D-glucosaminyl-(1-&gt;6)]-N-acetyl-alpha-D-galactosaminyl}-L-seryl-[protein] + UDP + H(+). The enzyme catalyses a 3-O-[beta-D-galactosyl-(1-&gt;3)-N-acetyl-alpha-D-galactosaminyl]-L-threonyl-[protein] + UDP-N-acetyl-alpha-D-glucosamine = a 3-O-{beta-D-galactosyl-(1-&gt;3)-[N-acetyl-beta-D-glucosaminyl-(1-&gt;6)]-N-acetyl-alpha-D-galactosaminyl}-L-threonyl-[protein] + UDP + H(+). It functions in the pathway protein modification; protein glycosylation. Functionally, glycosyltransferase that mediates core 2 O-glycan branching, an important step in mucin-type biosynthesis. Does not have core 4 O-glycan or I-branching enzyme activity. The protein is Beta-1,3-galactosyl-O-glycosyl-glycoprotein beta-1,6-N-acetylglucosaminyltransferase 4 (Gcnt4) of Mus musculus (Mouse).